A 520-amino-acid polypeptide reads, in one-letter code: Peptide chain release factor 3 (520 aa).

Positions 8-273 constitute a tr-type G domain; it reads EIRKTFAIIS…AYVDHAPMPS (266 aa). GTP is bound by residues 17–24, 85–89, and 139–142; these read SHPDAGKT, DTPGH, and NKLD.

The protein belongs to the TRAFAC class translation factor GTPase superfamily. Classic translation factor GTPase family. PrfC subfamily.

The protein localises to the cytoplasm. In terms of biological role, increases the formation of ribosomal termination complexes and stimulates activities of RF-1 and RF-2. It binds guanine nucleotides and has strong preference for UGA stop codons. It may interact directly with the ribosome. The stimulation of RF-1 and RF-2 is significantly reduced by GTP and GDP, but not by GMP. The sequence is that of Peptide chain release factor 3 from Macrococcus caseolyticus (strain JCSC5402) (Macrococcoides caseolyticum).